A 946-amino-acid polypeptide reads, in one-letter code: Bifunctional glutamine synthetase adenylyltransferase/adenylyl-removing enzyme (946 aa).

The adenylyl removase stretch occupies residues 1–440; the sequence is MKPLSSPLQQ…VFNELIGDDE (440 aa). The segment at 449–946 is adenylyl transferase; that stretch reads SEQWRELWQD…ASWQKWLVEE (498 aa).

Belongs to the GlnE family. Requires Mg(2+) as cofactor.

The catalysed reaction is [glutamine synthetase]-O(4)-(5'-adenylyl)-L-tyrosine + phosphate = [glutamine synthetase]-L-tyrosine + ADP. It catalyses the reaction [glutamine synthetase]-L-tyrosine + ATP = [glutamine synthetase]-O(4)-(5'-adenylyl)-L-tyrosine + diphosphate. Functionally, involved in the regulation of glutamine synthetase GlnA, a key enzyme in the process to assimilate ammonia. When cellular nitrogen levels are high, the C-terminal adenylyl transferase (AT) inactivates GlnA by covalent transfer of an adenylyl group from ATP to specific tyrosine residue of GlnA, thus reducing its activity. Conversely, when nitrogen levels are low, the N-terminal adenylyl removase (AR) activates GlnA by removing the adenylyl group by phosphorolysis, increasing its activity. The regulatory region of GlnE binds the signal transduction protein PII (GlnB) which indicates the nitrogen status of the cell. This is Bifunctional glutamine synthetase adenylyltransferase/adenylyl-removing enzyme from Escherichia coli O6:H1 (strain CFT073 / ATCC 700928 / UPEC).